We begin with the raw amino-acid sequence, 174 residues long: Inactive signal peptidase IA (174 aa).

The Cytoplasmic segment spans residues 1 to 7; it reads MKKVVKY. The helical transmembrane segment at 8–28 threads the bilayer; that stretch reads LISLILAIIIVLFVQTFVIVG. Topologically, residues 29 to 174 are extracellular; it reads HVIPNNDMSP…FSKWTIQFKS (146 aa).

Belongs to the peptidase S26 family.

It is found in the cell membrane. Its function is as follows. Catalytically inactive. The polypeptide is Inactive signal peptidase IA (spsA) (Staphylococcus aureus (strain Mu50 / ATCC 700699)).